Reading from the N-terminus, the 384-residue chain is MGGRAIVTDTNIFSGLESNTTGVTAFSMPAWQLALWATAYLGLVLVAVTGNATVIWIILAHERMRTVTNYFIINLALADLCMAAFNATFNFVYASHNIWYFGRAFCYFQNLFPITAMFVSIYSMTAIAADRYMAIVHPFQPRLSAPITKATIAGIWLVALALASPQCFYSTITVDQGATKCVVAWPNDNGGKMLLLYHLVVFVLVYFLPLVVMFVAYSVIGLTLWKRAVPRHQAHGANLRHLHAKKKFVKAMVLVVLTFAICWLPYHLYFILGSFQKDIYYRKFIQQVYLALFWLAMSSTMYNPIIYCCLNHRFRSGFRLAFRCCPWVTPTEEDRLELTRTPSLSRRVNRCHTKETLFMTADMTHSEATNGQVGSPQDVEPAAP.

The Extracellular segment spans residues 1–32; that stretch reads MGGRAIVTDTNIFSGLESNTTGVTAFSMPAWQ. The N-linked (GlcNAc...) asparagine glycan is linked to Asn-19. The helical transmembrane segment at 33–56 threads the bilayer; it reads LALWATAYLGLVLVAVTGNATVIW. The Cytoplasmic portion of the chain corresponds to 57–69; sequence IILAHERMRTVTN. The chain crosses the membrane as a helical span at residues 70-90; sequence YFIINLALADLCMAAFNATFN. Topologically, residues 91 to 107 are extracellular; sequence FVYASHNIWYFGRAFCY. Cys-106 and Cys-181 form a disulfide bridge. A helical membrane pass occupies residues 108 to 129; sequence FQNLFPITAMFVSIYSMTAIAA. At 130–149 the chain is on the cytoplasmic side; sequence DRYMAIVHPFQPRLSAPITK. Residues 150–170 form a helical membrane-spanning segment; it reads ATIAGIWLVALALASPQCFYS. Over 171-196 the chain is Extracellular; that stretch reads TITVDQGATKCVVAWPNDNGGKMLLL. The chain crosses the membrane as a helical span at residues 197–218; that stretch reads YHLVVFVLVYFLPLVVMFVAYS. Over 219-251 the chain is Cytoplasmic; the sequence is VIGLTLWKRAVPRHQAHGANLRHLHAKKKFVKA. The chain crosses the membrane as a helical span at residues 252 to 272; it reads MVLVVLTFAICWLPYHLYFIL. The Extracellular portion of the chain corresponds to 273–290; that stretch reads GSFQKDIYYRKFIQQVYL. A helical membrane pass occupies residues 291-310; that stretch reads ALFWLAMSSTMYNPIIYCCL. The Cytoplasmic segment spans residues 311 to 384; it reads NHRFRSGFRL…SPQDVEPAAP (74 aa). The S-palmitoyl cysteine moiety is linked to residue Cys-324.

It belongs to the G-protein coupled receptor 1 family.

The protein resides in the cell membrane. This is a receptor for the tachykinin neuropeptide substance K (neurokinin A). It is associated with G proteins that activate a phosphatidylinositol-calcium second messenger system. The rank order of affinity of this receptor to tachykinins is: substance K &gt; neuromedin-K &gt; substance P. In Mesocricetus auratus (Golden hamster), this protein is Substance-K receptor (TACR2).